The primary structure comprises 2347 residues: Proto-oncogene tyrosine-protein kinase ROS (2347 aa).

A signal peptide spans 1-27; the sequence is MKNIYCLIPKLVNFATLGCLWISVVQC. At 28-1859 the chain is on the extracellular side; sequence TVLNSCLKSC…LVGDDFWIPE (1832 aa). 3 N-linked (GlcNAc...) asparagine glycosylation sites follow: asparagine 52, asparagine 114, and asparagine 123. Fibronectin type-III domains lie at 101-196 and 197-285; these read LPTA…VPET and APLI…SSSA. 27 N-linked (GlcNAc...) asparagine glycosylation sites follow: asparagine 324, asparagine 352, asparagine 396, asparagine 471, asparagine 607, asparagine 628, asparagine 706, asparagine 714, asparagine 732, asparagine 939, asparagine 961, asparagine 1015, asparagine 1087, asparagine 1090, asparagine 1095, asparagine 1211, asparagine 1272, asparagine 1330, asparagine 1458, asparagine 1461, asparagine 1474, asparagine 1499, asparagine 1565, asparagine 1669, asparagine 1715, asparagine 1738, and asparagine 1808. Residues 557–671 form the Fibronectin type-III 3 domain; the sequence is LPGRPQELSV…EPSVGTTLVP (115 aa). Fibronectin type-III domains lie at 947-1042 and 1043-1150; these read IPDS…TVPS and APEN…TSEI. 4 Fibronectin type-III domains span residues 1450–1556, 1557–1656, 1658–1751, and 1752–1854; these read DTVE…TKNG, VPEA…VEMF, TPEK…TKAG, and VPNK…VGDD. Residues 1860–1882 traverse the membrane as a helical segment; the sequence is TSFILTIIVGIFLVVTIPLTFVW. Topologically, residues 1883-2347 are cytoplasmic; the sequence is HRRLKNQKSA…THSGYGDGSD (465 aa). One can recognise a Protein kinase domain in the interval 1945 to 2222; that stretch reads LTLRLLLGSG…DQLQLFRNFF (278 aa). Residues 1951-1959 and lysine 1980 each bind ATP; that span reads LGSGAFGEV. The Proton acceptor role is filled by aspartate 2079. The residue at position 2274 (tyrosine 2274) is a Phosphotyrosine; by autocatalysis. The tract at residues 2284–2311 is disordered; the sequence is GEEKSEGPLGSQESESCGLRKEEKEPHA. Residues 2301 to 2311 are compositionally biased toward basic and acidic residues; it reads GLRKEEKEPHA. Residue tyrosine 2334 is modified to Phosphotyrosine; by autocatalysis.

Belongs to the protein kinase superfamily. Tyr protein kinase family. Insulin receptor subfamily. As to quaternary structure, interacts with PTPN6 (via SH2 1 domain); the interaction is direct and promotes ROS1 dephosphorylation. Interacts with PTPN11; may activate the PI3 kinase-mTOR signaling pathway. Interacts with VAV3; constitutive interaction mediating VAV3 phosphorylation. In terms of processing, phosphorylated. Probably autophosphorylates. Phosphorylation at Tyr-2274 is required for the interaction with PTPN6 that mediates ROS1 dephosphorylation. Phosphorylation at Tyr-2274 stimulates the kinase activity and the activation of the ERK1 signaling cascade. Phosphorylation at Tyr-2274 and/or Tyr-2334 recruits PTPN11. As to expression, expressed in brain. Expression is increased in primary gliomas.

It localises to the cell membrane. It catalyses the reaction L-tyrosyl-[protein] + ATP = O-phospho-L-tyrosyl-[protein] + ADP + H(+). With respect to regulation, inhibited by dephosphorylation by PTPN6. Functionally, receptor tyrosine kinase (RTK) that plays a role in epithelial cell differentiation and regionalization of the proximal epididymal epithelium. NELL2 is an endogenous ligand for ROS1. Upon endogenous stimulation by NELL2, ROS1 activates the intracellular signaling pathway and triggers epididymal epithelial differentiation and subsequent sperm maturation. May activate several downstream signaling pathways related to cell differentiation, proliferation, growth and survival including the PI3 kinase-mTOR signaling pathway. Mediates the phosphorylation of PTPN11, an activator of this pathway. May also phosphorylate and activate the transcription factor STAT3 to control anchorage-independent cell growth. Mediates the phosphorylation and the activation of VAV3, a guanine nucleotide exchange factor regulating cell morphology. May activate other downstream signaling proteins including AKT1, MAPK1, MAPK3, IRS1 and PLCG2. The protein is Proto-oncogene tyrosine-protein kinase ROS (ROS1) of Homo sapiens (Human).